A 247-amino-acid polypeptide reads, in one-letter code: Synaptonemal complex central element protein 1-like (247 aa).

A coiled-coil region spans residues 71 to 196 (SEELGEAQAL…LQEARETWDS (126 aa)). The segment at 189–247 (EARETWDSPGNCGLKTELEELEGQSQRSPEAQNDKGEASQEEQHHLETSEELPRTGTLC) is disordered. Positions 220-241 (QNDKGEASQEEQHHLETSEELP) are enriched in basic and acidic residues.

It belongs to the SYCE family. In terms of tissue distribution, isoform 1 is abundantly expressed in testis and weakly in ovary, it is not found in other tissues. Isoform 2 is expressed in testis and poorly in brain, heart, lung and other examined tissues.

Functionally, may be involved in meiosis. Isoform 1 may be involved in meiosis during spermatogenesis while isoform 2 is probably related to a later stage of meiosis, in the development stage of secondary spermatocytes and spermatids. The chain is Synaptonemal complex central element protein 1-like (Syce1l) from Mus musculus (Mouse).